Here is a 352-residue protein sequence, read N- to C-terminus: MNTIVFNKLSGAVLFEDGGASERERGGRPYSGVLDSPHARPEVGIPDGPPLKDNLGLRHRRTGARQNGGKVRHKRQALQDMARPLKQWLYKHRDNPYPTKTEKILLALGSQMTLVQVSNWFANARRRLKNTVRQPDLSWALRIKLYNKYVQGNAERLSVSSDDSCSEDGENPPRTHMNEGGYNTPVHHPVIKSENSVIKAGVRPESRASEDYVAPPKYKSSLLNRYLNDSLRHVMATNTTMMGKTRQRNHSGSFSSNEFEEELVSPSSSETEGNFVYRTDTLENGSNKGESAANRKGPSKDDTYWKEINAAMALTNLAQGKDKLQGTTSCIIQKSSHIAEVKTVKVPLVQQF.

The segment at 19–54 is disordered; that stretch reads GASERERGGRPYSGVLDSPHARPEVGIPDGPPLKDN. The homeobox; TALE-type DNA-binding region spans 71-132; the sequence is VRHKRQALQD…NARRRLKNTV (62 aa). 2 disordered regions span residues 159–189 and 245–301; these read VSSD…VHHP and TRQR…PSKD.

It belongs to the TALE/IRO homeobox family.

Its subcellular location is the nucleus. Its function is as follows. May act as a morphogenetic regulator of cell adhesion. This is Homeobox protein Mohawk (MKX) from Homo sapiens (Human).